Consider the following 426-residue polypeptide: Serine hydroxymethyltransferase (426 aa).

Residues Leu-115 and 119–121 (GHI) contribute to the (6S)-5,6,7,8-tetrahydrofolate site. An N6-(pyridoxal phosphate)lysine modification is found at Lys-225.

This sequence belongs to the SHMT family. In terms of assembly, homodimer. The cofactor is pyridoxal 5'-phosphate.

The protein resides in the cytoplasm. The protein operates within amino-acid biosynthesis; glycine biosynthesis; glycine from L-serine: step 1/1. Its function is as follows. Catalyzes the reversible interconversion of serine and glycine with a modified folate serving as the one-carbon carrier. Also exhibits a pteridine-independent aldolase activity toward beta-hydroxyamino acids, producing glycine and aldehydes, via a retro-aldol mechanism. In Thermoplasma volcanium (strain ATCC 51530 / DSM 4299 / JCM 9571 / NBRC 15438 / GSS1), this protein is Serine hydroxymethyltransferase.